Reading from the N-terminus, the 379-residue chain is Chaperone protein DnaJ 2 (379 aa).

The region spanning 4-68 (DYYAVLGVRR…QKKQVYDLGG (65 aa)) is the J domain. Residues 130 to 212 (GTTKDIQVDT…CAGDGRVPSR (83 aa)) form a CR-type zinc finger. Residues Cys-143, Cys-146, Cys-160, Cys-163, Cys-186, Cys-189, Cys-200, and Cys-203 each contribute to the Zn(2+) site. CXXCXGXG motif repeat units follow at residues 143–150 (CNTCNGEG), 160–167 (CDMCRGRG), 186–193 (CPQCQGFA), and 200–207 (CPECAGDG). The tract at residues 351–379 (RGEERPTGQFQPGQQGLFSRLKDAFNGRS) is disordered. Residues 358–367 (GQFQPGQQGL) are compositionally biased toward polar residues. A compositionally biased stretch (basic and acidic residues) spans 370–379 (RLKDAFNGRS).

Belongs to the DnaJ family. Homodimer. It depends on Zn(2+) as a cofactor.

It localises to the cytoplasm. Participates actively in the response to hyperosmotic and heat shock by preventing the aggregation of stress-denatured proteins and by disaggregating proteins, also in an autonomous, DnaK-independent fashion. Unfolded proteins bind initially to DnaJ; upon interaction with the DnaJ-bound protein, DnaK hydrolyzes its bound ATP, resulting in the formation of a stable complex. GrpE releases ADP from DnaK; ATP binding to DnaK triggers the release of the substrate protein, thus completing the reaction cycle. Several rounds of ATP-dependent interactions between DnaJ, DnaK and GrpE are required for fully efficient folding. Also involved, together with DnaK and GrpE, in the DNA replication of plasmids through activation of initiation proteins. The chain is Chaperone protein DnaJ 2 from Streptomyces albus G.